A 318-amino-acid chain; its full sequence is tRNA(Ile)-lysidine synthase (318 aa).

Residue 26 to 31 (SGGADS) coordinates ATP.

Belongs to the tRNA(Ile)-lysidine synthase family.

The protein resides in the cytoplasm. The catalysed reaction is cytidine(34) in tRNA(Ile2) + L-lysine + ATP = lysidine(34) in tRNA(Ile2) + AMP + diphosphate + H(+). Functionally, ligates lysine onto the cytidine present at position 34 of the AUA codon-specific tRNA(Ile) that contains the anticodon CAU, in an ATP-dependent manner. Cytidine is converted to lysidine, thus changing the amino acid specificity of the tRNA from methionine to isoleucine. The chain is tRNA(Ile)-lysidine synthase from Nocardia farcinica (strain IFM 10152).